We begin with the raw amino-acid sequence, 419 residues long: MTTQLEQAWELAKQRFAAVGIDVEEALRQLDRLPVSMHCWQGDDVAGFENPEGSLTGGIQSTGNYPGKARNATELRADLEQALRLIPGPKRLNLHAIYLESDTPVARDQIKPEHFKNWVEWAKANRLGLDFNPTCFSHPLSADGFTLSHPDAKIRQFWIDHCKASRRVSAYFGEQLGTPSVMNIWIPDGMKDITVDRLAPRQRLLEALDEVISEKFDPAHHIDAVESKLFGIGAESYTVGSNEFYMGYATSRQTALCLDAGHFHPTEVISDKISAAMLYVPRLLLHVSRPVRWDSDHVVLLDDETQAIASEIVRHNLFDRVHIGLDFFDASINRVAAWVIGTRNMKKALLRALLEPTDQLRQLEASGDYTARLALLEEQKSLPWQAVWEMYCQRHDTPAGSQWLDSVRVYEKEILSKRS.

Histidine 262, aspartate 294, and aspartate 296 together coordinate Mn(2+).

Belongs to the rhamnose isomerase family. In terms of assembly, homotetramer. The cofactor is Mn(2+).

It localises to the cytoplasm. It carries out the reaction L-rhamnopyranose = L-rhamnulose. It functions in the pathway carbohydrate degradation; L-rhamnose degradation; glycerone phosphate from L-rhamnose: step 1/3. Functionally, catalyzes the interconversion of L-rhamnose and L-rhamnulose. The sequence is that of L-rhamnose isomerase from Salmonella typhimurium (strain LT2 / SGSC1412 / ATCC 700720).